We begin with the raw amino-acid sequence, 239 residues long: Dihydromethanopterin reductase (acceptor) (239 aa).

2 4Fe-4S ferredoxin-type domains span residues 144 to 175 and 176 to 205; these read MPYNIDRKQCKHCETCPPRENCPHEAISEKNG and VTDQIDLLKCKGCGICKELCPYNAIKGGPV. The [4Fe-4S] cluster site is built by cysteine 153, cysteine 156, cysteine 159, cysteine 165, cysteine 185, cysteine 188, cysteine 191, and cysteine 195.

As to quaternary structure, homodimer. The cofactor is [4Fe-4S] cluster.

It catalyses the reaction 5,6,7,8-tetrahydromethanopterin + A = 7,8-dihydromethanopterin + AH2. The protein operates within cofactor biosynthesis; 5,6,7,8-tetrahydromethanopterin biosynthesis. Its function is as follows. Involved in the biosynthesis of tetrahydromethanopterin, a coenzyme used in methanogenesis. Catalyzes the reduction of dihydromethanopterin (H(2)MPT) to tetrahydromethanopterin (H(4)MPT). Ferredoxin may serve as an electron donor. The polypeptide is Dihydromethanopterin reductase (acceptor) (Methanosarcina mazei (strain ATCC BAA-159 / DSM 3647 / Goe1 / Go1 / JCM 11833 / OCM 88) (Methanosarcina frisia)).